A 221-amino-acid polypeptide reads, in one-letter code: Octanoyltransferase (221 aa).

Positions 38–220 constitute a BPL/LPL catalytic domain; that stretch reads GEIPDTLLLL…GFREVLGDPG (183 aa). Residues 84-91, 149-151, and 163-165 each bind substrate; these read RGGDATFH, AIG, and GFA. Cysteine 181 serves as the catalytic Acyl-thioester intermediate.

This sequence belongs to the LipB family.

Its subcellular location is the cytoplasm. It carries out the reaction octanoyl-[ACP] + L-lysyl-[protein] = N(6)-octanoyl-L-lysyl-[protein] + holo-[ACP] + H(+). The protein operates within protein modification; protein lipoylation via endogenous pathway; protein N(6)-(lipoyl)lysine from octanoyl-[acyl-carrier-protein]: step 1/2. Functionally, catalyzes the transfer of endogenously produced octanoic acid from octanoyl-acyl-carrier-protein onto the lipoyl domains of lipoate-dependent enzymes. Lipoyl-ACP can also act as a substrate although octanoyl-ACP is likely to be the physiological substrate. In Rubrobacter xylanophilus (strain DSM 9941 / JCM 11954 / NBRC 16129 / PRD-1), this protein is Octanoyltransferase.